Here is a 392-residue protein sequence, read N- to C-terminus: O-phospho-L-seryl-tRNA:Cys-tRNA synthase 2 (392 aa).

Residues 85-86, Asn190, and 213-215 each bind pyridoxal 5'-phosphate; these read AR and SGH. N6-(pyridoxal phosphate)lysine is present on Lys216.

It belongs to the SepCysS family. In terms of assembly, homodimer. Interacts with SepRS. Requires pyridoxal 5'-phosphate as cofactor.

The catalysed reaction is O-phospho-L-seryl-tRNA(Cys) + hydrogen sulfide + H(+) = L-cysteinyl-tRNA(Cys) + phosphate. Converts O-phospho-L-seryl-tRNA(Cys) (Sep-tRNA(Cys)) to L-cysteinyl-tRNA(Cys) (Cys-tRNA(Cys)). This Methanocorpusculum labreanum (strain ATCC 43576 / DSM 4855 / Z) protein is O-phospho-L-seryl-tRNA:Cys-tRNA synthase 2.